A 442-amino-acid polypeptide reads, in one-letter code: tRNA modification GTPase MnmE (442 aa).

Positions 27, 84, and 124 each coordinate (6S)-5-formyl-5,6,7,8-tetrahydrofolate. The TrmE-type G domain maps to 221-366 (GLHVVIVGAP…LLDALQAFAE (146 aa)). GTP contacts are provided by residues 231–236 (NAGKSS), 250–256 (SKEAGTT), and 275–278 (DTAG). Mg(2+) contacts are provided by serine 235 and threonine 256. Lysine 442 serves as a coordination point for (6S)-5-formyl-5,6,7,8-tetrahydrofolate.

The protein belongs to the TRAFAC class TrmE-Era-EngA-EngB-Septin-like GTPase superfamily. TrmE GTPase family. In terms of assembly, homodimer. Heterotetramer of two MnmE and two MnmG subunits. The cofactor is K(+).

The protein localises to the cytoplasm. Functionally, exhibits a very high intrinsic GTPase hydrolysis rate. Involved in the addition of a carboxymethylaminomethyl (cmnm) group at the wobble position (U34) of certain tRNAs, forming tRNA-cmnm(5)s(2)U34. The protein is tRNA modification GTPase MnmE of Brucella suis biovar 1 (strain 1330).